The following is a 657-amino-acid chain: Wall-associated receptor kinase-like 20 (657 aa).

The N-terminal stretch at 1–23 (MEKKRSYYALLIPTLLTVWLACA) is a signal peptide. Topologically, residues 24-293 (GHSCARHAKA…KHCKKKKKTV (270 aa)) are extracellular. Asn140 is a glycosylation site (N-linked (GlcNAc...) asparagine). The chain crosses the membrane as a helical span at residues 294–314 (VFAGAAVAVVGVTLAIAVAVI). Over 315–657 (GTKHSHQKVK…NILSQEVTET (343 aa)) the chain is Cytoplasmic. In terms of domain architecture, Protein kinase spans 363–646 (FSKDNLIGTG…KEVADEIEYI (284 aa)). ATP-binding positions include 369-377 (IGTGGFGEV) and Lys391. The active-site Proton acceptor is the Asp490.

Belongs to the protein kinase superfamily. Ser/Thr protein kinase family.

The protein resides in the membrane. It catalyses the reaction L-seryl-[protein] + ATP = O-phospho-L-seryl-[protein] + ADP + H(+). The catalysed reaction is L-threonyl-[protein] + ATP = O-phospho-L-threonyl-[protein] + ADP + H(+). Serine/threonine-protein kinase that may function as a signaling receptor of extracellular matrix component. The sequence is that of Wall-associated receptor kinase-like 20 (WAKL20) from Arabidopsis thaliana (Mouse-ear cress).